A 383-amino-acid chain; its full sequence is Anhydro-N-acetylmuramic acid kinase (383 aa).

9-16 (GTSLDGID) is a binding site for ATP.

Belongs to the anhydro-N-acetylmuramic acid kinase family.

It catalyses the reaction 1,6-anhydro-N-acetyl-beta-muramate + ATP + H2O = N-acetyl-D-muramate 6-phosphate + ADP + H(+). It participates in amino-sugar metabolism; 1,6-anhydro-N-acetylmuramate degradation. It functions in the pathway cell wall biogenesis; peptidoglycan recycling. Functionally, catalyzes the specific phosphorylation of 1,6-anhydro-N-acetylmuramic acid (anhMurNAc) with the simultaneous cleavage of the 1,6-anhydro ring, generating MurNAc-6-P. Is required for the utilization of anhMurNAc either imported from the medium or derived from its own cell wall murein, and thus plays a role in cell wall recycling. In Clostridioides difficile (strain 630) (Peptoclostridium difficile), this protein is Anhydro-N-acetylmuramic acid kinase.